Reading from the N-terminus, the 197-residue chain is Adrenodoxin-like protein 1, mitochondrial (197 aa).

The N-terminal 35 residues, 1–35 (MIGHRISRLGSTIVKQLAREGYLATYGTKNLHRSY), are a transit peptide targeting the mitochondrion. The 2Fe-2S ferredoxin-type domain occupies 79-184 (EKITIIFVDK…GVRLAIPSAT (106 aa)). Positions 118, 124, 127, and 165 each coordinate [2Fe-2S] cluster.

This sequence belongs to the adrenodoxin/putidaredoxin family. Requires [2Fe-2S] cluster as cofactor.

The protein localises to the mitochondrion matrix. Its function is as follows. Associates in vitro with the adrenodoxin reductase MFDR to form an efficient low potential electron transfer chain that is able to reduce cytochrome C. Functions as accessory mitochondrial protein involved with BIO2 in the plant biotin synthase reaction. The chain is Adrenodoxin-like protein 1, mitochondrial from Arabidopsis thaliana (Mouse-ear cress).